A 399-amino-acid polypeptide reads, in one-letter code: Elongation factor Tu 1 (399 aa).

The tr-type G domain maps to Lys-17–Arg-208. Residues Gly-26 to Thr-33 are G1. Residue Gly-26–Thr-33 coordinates GTP. Thr-33 provides a ligand contact to Mg(2+). The G2 stretch occupies residues Gly-62 to Ala-66. The tract at residues Asp-83–Gly-86 is G3. GTP contacts are provided by residues Asp-83–His-87 and Asn-138–Asp-141. The tract at residues Asn-138 to Asp-141 is G4. The G5 stretch occupies residues Ser-175–Leu-177.

This sequence belongs to the TRAFAC class translation factor GTPase superfamily. Classic translation factor GTPase family. EF-Tu/EF-1A subfamily. In terms of assembly, monomer.

The protein resides in the cytoplasm. It catalyses the reaction GTP + H2O = GDP + phosphate + H(+). Its function is as follows. GTP hydrolase that promotes the GTP-dependent binding of aminoacyl-tRNA to the A-site of ribosomes during protein biosynthesis. This Wolbachia sp. subsp. Brugia malayi (strain TRS) protein is Elongation factor Tu 1.